The primary structure comprises 506 residues: Zinc finger protein 157 (506 aa).

The KRAB domain maps to 27–98 (VSFEDVAVDF…EEESSGHGYS (72 aa)). 12 consecutive C2H2-type zinc fingers follow at residues 162–184 (FECH…LRIH), 190–212 (YECG…QKTH), 218–240 (FECN…TRTH), 246–268 (YECT…QRTH), 274–296 (YECS…HRTH), 302–324 (YECG…QRIH), 330–352 (YECG…QRTH), 358–380 (YQCN…QRIH), 386–408 (YECN…QRMH), 414–436 (YECS…RRTH), 442–464 (YECS…QRIH), and 470–492 (FECQ…QRTH).

This sequence belongs to the krueppel C2H2-type zinc-finger protein family.

The protein resides in the nucleus. May be involved in transcriptional regulation. The protein is Zinc finger protein 157 (ZNF157) of Homo sapiens (Human).